We begin with the raw amino-acid sequence, 739 residues long: MICOS complex subunit Mic60 (739 aa).

A disordered region spans residues 23-63 (ANNRQFGGSSSGSGGREQGRRQQEEQGQQGDQGYQGYQSLP). Residues 47–61 (EQGQQGDQGYQGYQS) show a composition bias toward low complexity. A helical membrane pass occupies residues 69–89 (AGFGKVVLFVSPLAAVGGVIT). Residues 154 to 219 (VTGLFGGGSG…PAAKPKDNPL (66 aa)) form a disordered region. Residues 163-198 (GDDKSKKSKVEPVKATPAEEKRPSKPSEVSKTEAKP) show a composition bias toward basic and acidic residues. Over residues 199-212 (VSKPAAAAAPAPAA) the composition is skewed to low complexity. Residues 283–339 (TAVATAERAAREAQEKIVACEIALSAAATAQNAKKVEAVRDKIKKLVDHIGNVKDEL) are a coiled coil.

The protein belongs to the MICOS complex subunit Mic60 family. In terms of assembly, component of the mitochondrial contact site and cristae organizing system (MICOS) complex. Interacts with the mitochondria-shaping protein Opa1.

It is found in the mitochondrion inner membrane. Component of the MICOS complex, a large protein complex of the mitochondrial inner membrane that plays crucial roles in the maintenance of crista junctions, inner membrane architecture, and formation of contact sites to the outer membrane. This chain is MICOS complex subunit Mic60, found in Drosophila melanogaster (Fruit fly).